A 398-amino-acid chain; its full sequence is Arylacetamide deacetylase (398 aa).

Over 1 to 5 (MGRTI) the chain is Cytoplasmic. A helical; Signal-anchor for type II membrane protein transmembrane segment spans residues 6–26 (FLLISVVLVAYYIYIPLPDDI). Topologically, residues 27 to 398 (EEPWKIILGN…QYLNWLHKNL (372 aa)) are lumenal. Asn77 carries N-linked (GlcNAc...) asparagine glycosylation. The Involved in the stabilization of the negatively charged intermediate by the formation of the oxyanion hole signature appears at 110-112 (HGG). Cys115 and Cys339 form a disulfide bridge. The active site involves Ser188. Residues Asn192, Asn281, and Asn324 are each glycosylated (N-linked (GlcNAc...) asparagine). Catalysis depends on residues Asp342 and His372.

This sequence belongs to the 'GDXG' lipolytic enzyme family. In terms of tissue distribution, highest levels in liver with lower levels in jejunum, kidney and testis.

Its subcellular location is the endoplasmic reticulum membrane. It localises to the microsome membrane. The enzyme catalyses a triacylglycerol + H2O = a diacylglycerol + a fatty acid + H(+). Functionally, displays cellular triglyceride lipase activity in liver, increases the levels of intracellular fatty acids derived from the hydrolysis of newly formed triglyceride stores and plays a role in very low-density lipoprotein assembly. Displays serine esterase activity in liver. Deacetylates a variety of arylacetamide substrates, including xenobiotic compounds and procarcinogens, converting them to the primary arylamide compounds and increasing their toxicity. The protein is Arylacetamide deacetylase (Aadac) of Rattus norvegicus (Rat).